The following is a 139-amino-acid chain: MAQMTVQIVTPDGLIYDHHAAFVSVKTIDGELGILPRHINTIAVLEVDQVKVRRVDDDKHIDWIAVNGGIIEIADNVITIVADSAERARDIDISRAERAKRRAELEIEEAHDKHLIDQERRAKIALQRAINRINVGTRI.

This sequence belongs to the ATPase epsilon chain family. F-type ATPases have 2 components, CF(1) - the catalytic core - and CF(0) - the membrane proton channel. CF(1) has five subunits: alpha(3), beta(3), gamma(1), delta(1), epsilon(1). CF(0) has three main subunits: a, b and c.

The protein resides in the cell membrane. Produces ATP from ADP in the presence of a proton gradient across the membrane. The protein is ATP synthase epsilon chain of Streptococcus sanguinis.